A 449-amino-acid polypeptide reads, in one-letter code: uncharacterized protein (449 aa).

Disordered stretches follow at residues 1-58 (MVKR…SLSS) and 71-125 (EALE…VVEL). A compositionally biased stretch (basic and acidic residues) spans 30–46 (KQRDELREKQKRKREDS). A compositionally biased stretch (acidic residues) spans 103 to 124 (SDDDDDDNEEEDDNGFEDQVVE).

The protein belongs to the bystin family.

This is an uncharacterized protein from Caenorhabditis elegans.